The following is a 334-amino-acid chain: Beta-glucanase (334 aa).

Positions 1-27 are cleaved as a signal peptide; it reads MKNRVISLLMASLLLVLSVIVAPFYKA. In terms of domain architecture, GH16 spans 28–248; that stretch reads EAATVVNTPF…YVKYYPNGVP (221 aa). Catalysis depends on glutamate 136, which acts as the Nucleophile. Residue glutamate 140 is the Proton donor of the active site. The interval 246 to 265 is disordered; that stretch reads GVPQDNPTPTPTIAPSTPTN. In terms of domain architecture, Dockerin spans 267-334; the sequence is NLPLKGDVNG…RYLIRAIPSL (68 aa).

This sequence belongs to the glycosyl hydrolase 16 family.

It catalyses the reaction Hydrolysis of (1-&gt;4)-beta-D-glucosidic linkages in beta-D-glucans containing (1-&gt;3)- and (1-&gt;4)-bonds.. This is Beta-glucanase (licB) from Acetivibrio thermocellus (Hungateiclostridium thermocellum).